Here is a 148-residue protein sequence, read N- to C-terminus: UPF0260 protein YPK_2117 (148 aa).

The protein belongs to the UPF0260 family.

This chain is UPF0260 protein YPK_2117, found in Yersinia pseudotuberculosis serotype O:3 (strain YPIII).